Here is a 42-residue protein sequence, read N- to C-terminus: Large ribosomal subunit protein P2 (42 aa).

It belongs to the eukaryotic ribosomal protein P1/P2 family. In terms of assembly, P1 and P2 exist as dimers at the large ribosomal subunit. Phosphorylated.

Functionally, plays an important role in the elongation step of protein synthesis. In Triticum aestivum (Wheat), this protein is Large ribosomal subunit protein P2.